The following is a 378-amino-acid chain: Queuine tRNA-ribosyltransferase (378 aa).

Asp-89 acts as the Proton acceptor in catalysis. Residues 89–93 (DSGGF), Asp-143, Gln-194, and Gly-221 contribute to the substrate site. The RNA binding stretch occupies residues 252 to 258 (GVGTPAN). The active-site Nucleophile is Asp-271. Residues 276-280 (ARNGR) form an RNA binding; important for wobble base 34 recognition region. The Zn(2+) site is built by Cys-309, Cys-311, Cys-314, and His-340.

It belongs to the queuine tRNA-ribosyltransferase family. As to quaternary structure, homodimer. Within each dimer, one monomer is responsible for RNA recognition and catalysis, while the other monomer binds to the replacement base PreQ1. Zn(2+) serves as cofactor.

The catalysed reaction is 7-aminomethyl-7-carbaguanine + guanosine(34) in tRNA = 7-aminomethyl-7-carbaguanosine(34) in tRNA + guanine. It participates in tRNA modification; tRNA-queuosine biosynthesis. Its function is as follows. Catalyzes the base-exchange of a guanine (G) residue with the queuine precursor 7-aminomethyl-7-deazaguanine (PreQ1) at position 34 (anticodon wobble position) in tRNAs with GU(N) anticodons (tRNA-Asp, -Asn, -His and -Tyr). Catalysis occurs through a double-displacement mechanism. The nucleophile active site attacks the C1' of nucleotide 34 to detach the guanine base from the RNA, forming a covalent enzyme-RNA intermediate. The proton acceptor active site deprotonates the incoming PreQ1, allowing a nucleophilic attack on the C1' of the ribose to form the product. After dissociation, two additional enzymatic reactions on the tRNA convert PreQ1 to queuine (Q), resulting in the hypermodified nucleoside queuosine (7-(((4,5-cis-dihydroxy-2-cyclopenten-1-yl)amino)methyl)-7-deazaguanosine). This Lachnoclostridium phytofermentans (strain ATCC 700394 / DSM 18823 / ISDg) (Clostridium phytofermentans) protein is Queuine tRNA-ribosyltransferase.